The chain runs to 1002 residues: DNA-directed RNA polymerase 1, mitochondrial (1002 aa).

The transit peptide at 1-21 directs the protein to the mitochondrion; that stretch reads MWRYISKQAYSRKFRNSHDSA. Catalysis depends on residues aspartate 703, lysine 778, and aspartate 935.

Belongs to the phage and mitochondrial RNA polymerase family. As to expression, the highest levels of expression are detected in the mature leaves. The level of expression is lowest in the cotyledons.

The protein resides in the mitochondrion. The enzyme catalyses RNA(n) + a ribonucleoside 5'-triphosphate = RNA(n+1) + diphosphate. DNA-dependent RNA polymerase catalyzes the transcription of DNA into RNA using the four ribonucleoside triphosphates as substrates. This chain is DNA-directed RNA polymerase 1, mitochondrial (RPOT1), found in Nicotiana sylvestris (Wood tobacco).